The chain runs to 133 residues: Mediator of RNA polymerase II transcription subunit 10 (133 aa).

Positions 1-13 (MSTEASTGETPEF) are enriched in polar residues. The disordered stretch occupies residues 1–28 (MSTEASTGETPEFQSYDHRGSPTQEAMK). Basic and acidic residues predominate over residues 15 to 28 (SYDHRGSPTQEAMK).

It belongs to the Mediator complex subunit 10 family. As to quaternary structure, component of the Mediator complex.

Its subcellular location is the nucleus. Its function is as follows. Component of the Mediator complex, a coactivator involved in the regulated transcription of nearly all RNA polymerase II-dependent genes. Mediator functions as a bridge to convey information from gene-specific regulatory proteins to the basal RNA polymerase II transcription machinery. Mediator is recruited to promoters by direct interactions with regulatory proteins and serves as a scaffold for the assembly of a functional preinitiation complex with RNA polymerase II and the general transcription factors. The protein is Mediator of RNA polymerase II transcription subunit 10 (NUT2) of Phaeosphaeria nodorum (strain SN15 / ATCC MYA-4574 / FGSC 10173) (Glume blotch fungus).